We begin with the raw amino-acid sequence, 755 residues long: E3 ubiquitin-protein ligase TRIM56 (755 aa).

The RING-type zinc finger occupies 21–60; sequence CKICLEQLRAPKTLPCLHTYCQDCLAQLADGGRVRCPECR. B box-type zinc fingers lie at residues 98-149 and 164-205; these read KPAC…VVDL and RQAA…CLPL. Positions 169, 172, 192, and 197 each coordinate Zn(2+). Residues 216–314 are a coiled coil; sequence LEGLLAGVDN…AAAFARRVLS (99 aa). Residues 371 to 484 form a disordered region; that stretch reads EEQQPQKDGG…SPALGPNLDG (114 aa). Over residues 392–404 the composition is skewed to basic and acidic residues; sequence SQSRREDEPKTER. Residues Thr-418 and Thr-442 each carry the phosphothreonine modification. Over residues 419–447 the composition is skewed to basic and acidic residues; sequence PKEEKAQTTREEGAQTLEEDRAQTPHEDG. A compositionally biased stretch (basic residues) spans 453–469; the sequence is RGGRPNKKKKFKGRLKS. Phosphoserine is present on Ser-475.

Belongs to the TRIM/RBCC family. As to quaternary structure, homooligomer. Interacts with STING1. Interacts with TICAM1. (Microbial infection) Preferentially ubiquitinated with 'Lys-48' and 'Lys-11'-linked ubiquitin chains by Salmonella effector SopA leading to proteasomal targeting and degradation. Post-translationally, autoubiquitinated. As to expression, widely expressed (at protein level).

The protein localises to the cytoplasm. The catalysed reaction is S-ubiquitinyl-[E2 ubiquitin-conjugating enzyme]-L-cysteine + [acceptor protein]-L-lysine = [E2 ubiquitin-conjugating enzyme]-L-cysteine + N(6)-ubiquitinyl-[acceptor protein]-L-lysine.. Its pathway is protein modification; protein ubiquitination. Its function is as follows. E3 ubiquitin-protein ligase that plays a key role in innate antiviral immunity by mediating ubiquitination of CGAS and STING1. In response to pathogen- and host-derived double-stranded DNA (dsDNA), targets STING1 to 'Lys-63'-linked ubiquitination, thereby promoting its homodimerization, a step required for the production of type I interferon IFN-beta. Also mediate monoubiquitination of CGAS, thereby promoting CGAS oligomerization and subsequent activation. Promotes also TNFalpha-induced NF-kappa-B signaling by mediating 'Lys-63'-linked ubiquitination TAK1, leading to enhanced interaction between TAK1 and CHUK/IKKalpha. Independently of its E3 ubiquitin ligase activity, positive regulator of TLR3 signaling. Potentiates extracellular double stranded RNA (dsRNA)-induced expression of IFNB1 and interferon-stimulated genes ISG15, IFIT1/ISG56, CXCL10, OASL and CCL5/RANTES. Promotes establishment of an antiviral state by TLR3 ligand and TLR3-mediated chemokine induction following infection by hepatitis C virus. Acts as a restriction factor of Zika virus through direct interaction with the viral RNA via its C-terminal region. This chain is E3 ubiquitin-protein ligase TRIM56, found in Homo sapiens (Human).